We begin with the raw amino-acid sequence, 1063 residues long: Exportin-1 (1063 aa).

The region spanning Ala-43 to Lys-109 is the Importin N-terminal domain. The disordered stretch occupies residues Ala-1034 to Glu-1063.

This sequence belongs to the exportin family. As to quaternary structure, interacts with Clbn (via its N-terminus). Associates with the nuclear pore complex via interaction with mbo and Nup214. Interacts with target proteins containing NES sequences such as actin and dl. In terms of tissue distribution, high expression observed in the developing embryonic brain, hind gut and posterior spiracles shortly before dorsal closure; and in the ventral nerve cord, midgut and somatic musculature shortly after dorsal closure. Expression increases when the tissue is well developed.

The protein resides in the nucleus. It is found in the nucleus membrane. Receptor for the leucine-rich nuclear export signal (NES). Binds cooperatively to the NES on its target protein and to the small GTPase Ran in its active GTP-bound form. Involved in the export of dl, RpS2 and the pre-40S ribosome from the nucleus to the cytoplasm. Plays an important role in nuclear pore assembly by mediating nucleoporin condensation and biogenesis of annulate lamellae. Required for the function or maintenance of certain tissues such as brain and gut. This is Exportin-1 from Drosophila melanogaster (Fruit fly).